Consider the following 1544-residue polypeptide: Rho guanine nucleotide exchange factor 12 (1544 aa).

A disordered region spans residues 1 to 62 (MSGTQSTITD…KTKSSSEESR (62 aa)). At Ser2 the chain carries N-acetylserine. Positions 28–45 (SPTDKKQKVERIASHDFD) are enriched in basic and acidic residues. Ser41 bears the Phosphoserine mark. Positions 72–151 (CVIIQKDDNG…LTVQGRPPGS (80 aa)) constitute a PDZ domain. The stretch at 194–262 (MGEENNVVHN…LSKATGSAQD (69 aa)) forms a coiled coil. Residues 247–346 (PQLQEQLSKA…SLVGSPSTRI (100 aa)) form a disordered region. 2 stretches are compositionally biased toward polar residues: residues 249 to 260 (LQEQLSKATGSA) and 293 to 309 (DCSS…NADS). At Ser309 the chain carries Phosphoserine. The span at 313 to 329 (GPKERIYLEENPEKSET) shows a compositional bias: basic and acidic residues. Positions 330–344 (IQDTDTQSLVGSPST) are enriched in polar residues. Position 341 is a phosphoserine (Ser341). One can recognise an RGSL domain in the interval 367 to 558 (GQCSCFQSIE…LMYMKHLGVK (192 aa)). The segment at 570–706 (GRIGFLPKIK…GDTLDGTPRT (137 aa)) is disordered. Residues 582 to 592 (MKKDKEGEEKG) are compositionally biased toward basic and acidic residues. A compositionally biased stretch (polar residues) spans 631 to 640 (STPSSVSPEP). Ser637 bears the Phosphoserine mark. The segment covering 663-676 (ANSMSSVASGASFS) has biased composition (low complexity). Thr736 carries the post-translational modification Phosphothreonine. The 191-residue stretch at 787–977 (KRQEVINELF…RQILNYVNQA (191 aa)) folds into the DH domain. The region spanning 1019 to 1132 (KMIHEGPLVW…WQDLICRMAA (114 aa)) is the PH domain. The segment covering 1138–1149 (STKPIPLPQSTP) has biased composition (polar residues). The disordered stretch occupies residues 1138–1179 (STKPIPLPQSTPGEGDNDEEDPSKLKEEQHGISVTGLQSPDR). Ser1288, Ser1327, Ser1377, Ser1457, and Ser1541 each carry phosphoserine.

Interacts with GNA12 and GNA13, probably through the RGS-like domain. Interacts with RHOA, PLXNB1 and PLXNB2. Interacts through its PDZ domain with IGF1R beta subunit. Interacts with GCSAM. Found in a complex with ARHGEF11 and ARHGEF12; binding to ARHGEF11 and ARHGEF12 enhances CDC42 GEF activity of PLEKHG4B, and PLEKHG4B, in turn, inhibits ARHGEF11- and ARHGEF12-mediated RHOA activation. In terms of tissue distribution, ubiquitously expressed. Isoform 2 is found in jejunum and testis.

The protein resides in the cytoplasm. The protein localises to the membrane. Functionally, may play a role in the regulation of RhoA GTPase by guanine nucleotide-binding alpha-12 (GNA12) and alpha-13 (GNA13). Acts as guanine nucleotide exchange factor (GEF) for RhoA GTPase and may act as GTPase-activating protein (GAP) for GNA12 and GNA13. The sequence is that of Rho guanine nucleotide exchange factor 12 (ARHGEF12) from Homo sapiens (Human).